The chain runs to 247 residues: Anionic trypsin (247 aa).

The N-terminal stretch at 1-15 is a signal peptide; the sequence is MNPLLILAFLGAAVA. The propeptide at 16-23 is activation peptide; that stretch reads TPTDDDDK. Residues 24–244 form the Peptidase S1 domain; that stretch reads IVGGYTCEEN…FVDWIQSTIA (221 aa). 6 disulfides stabilise this stretch: C30–C160, C48–C64, C132–C233, C139–C206, C171–C185, and C196–C220. H63 serves as the catalytic Charge relay system. Ca(2+)-binding residues include E75, N77, V80, and E85. D107 serves as the catalytic Charge relay system. Catalysis depends on S200, which acts as the Charge relay system.

This sequence belongs to the peptidase S1 family. It depends on Ca(2+) as a cofactor.

The protein resides in the secreted. Its subcellular location is the extracellular space. The catalysed reaction is Preferential cleavage: Arg-|-Xaa, Lys-|-Xaa.. The polypeptide is Anionic trypsin (Canis lupus familiaris (Dog)).